The following is a 473-amino-acid chain: Photosystem II CP43 reaction center protein (473 aa).

A propeptide spanning residues 1–14 (MKTLYSLRRFYHVE) is cleaved from the precursor. Residue Thr15 is modified to N-acetylthreonine. At Thr15 the chain carries Phosphothreonine. Helical transmembrane passes span 69–93 (LFEV…PHLA), 134–155 (LLGP…KDRN), 178–200 (KALY…RKIT), 255–275 (KPFA…LSYS), and 291–312 (WFNN…ASQA). Residue Glu367 coordinates [CaMn4O5] cluster. Residues 447-471 (RARAAAAGFEKGIDRDFEPVLSMTP) traverse the membrane as a helical segment.

It belongs to the PsbB/PsbC family. PsbC subfamily. PSII is composed of 1 copy each of membrane proteins PsbA, PsbB, PsbC, PsbD, PsbE, PsbF, PsbH, PsbI, PsbJ, PsbK, PsbL, PsbM, PsbT, PsbX, PsbY, PsbZ, Psb30/Ycf12, at least 3 peripheral proteins of the oxygen-evolving complex and a large number of cofactors. It forms dimeric complexes. Binds multiple chlorophylls and provides some of the ligands for the Ca-4Mn-5O cluster of the oxygen-evolving complex. It may also provide a ligand for a Cl- that is required for oxygen evolution. PSII binds additional chlorophylls, carotenoids and specific lipids. is required as a cofactor.

The protein localises to the plastid. It is found in the chloroplast thylakoid membrane. One of the components of the core complex of photosystem II (PSII). It binds chlorophyll and helps catalyze the primary light-induced photochemical processes of PSII. PSII is a light-driven water:plastoquinone oxidoreductase, using light energy to abstract electrons from H(2)O, generating O(2) and a proton gradient subsequently used for ATP formation. This is Photosystem II CP43 reaction center protein from Nicotiana tabacum (Common tobacco).